The chain runs to 358 residues: Tetraacyldisaccharide 4'-kinase (358 aa).

71 to 78 (IAGGAGKT) is a binding site for ATP.

The protein belongs to the LpxK family.

It carries out the reaction a lipid A disaccharide + ATP = a lipid IVA + ADP + H(+). The protein operates within glycolipid biosynthesis; lipid IV(A) biosynthesis; lipid IV(A) from (3R)-3-hydroxytetradecanoyl-[acyl-carrier-protein] and UDP-N-acetyl-alpha-D-glucosamine: step 6/6. Its function is as follows. Transfers the gamma-phosphate of ATP to the 4'-position of a tetraacyldisaccharide 1-phosphate intermediate (termed DS-1-P) to form tetraacyldisaccharide 1,4'-bis-phosphate (lipid IVA). The chain is Tetraacyldisaccharide 4'-kinase from Methylibium petroleiphilum (strain ATCC BAA-1232 / LMG 22953 / PM1).